The sequence spans 110 residues: NADH-quinone oxidoreductase subunit K (110 aa).

The next 3 membrane-spanning stretches (helical) occupy residues 13–33, 38–58, and 70–90; these read VTHG…GIII, ILIL…NFLI, and VFVF…LAIV.

The protein belongs to the complex I subunit 4L family. NDH-1 is composed of 14 different subunits. Subunits NuoA, H, J, K, L, M, N constitute the membrane sector of the complex.

The protein localises to the cell inner membrane. The enzyme catalyses a quinone + NADH + 5 H(+)(in) = a quinol + NAD(+) + 4 H(+)(out). Its function is as follows. NDH-1 shuttles electrons from NADH, via FMN and iron-sulfur (Fe-S) centers, to quinones in the respiratory chain. The immediate electron acceptor for the enzyme in this species is believed to be ubiquinone. Couples the redox reaction to proton translocation (for every two electrons transferred, four hydrogen ions are translocated across the cytoplasmic membrane), and thus conserves the redox energy in a proton gradient. The protein is NADH-quinone oxidoreductase subunit K of Francisella tularensis subsp. holarctica (strain FTNF002-00 / FTA).